Consider the following 234-residue polypeptide: MDIKLKDFEGPLDLLLHLVSQYKVDIYEVPIVEVIEQYLNYIETLQVMKLEVAGDYMLMASQLMLIKSRRLLPKVVEHIEEEDLEQDLLEKIEEYSRFKTVSQALAKQHDQRAKWYSKPKQELIFEDAILQEDKTVMDLFLAFSNIMAAKRAVLKNNHTVIERDDYKIEDMMASIKQRLEKENVISLSAIFEECQTLNEVISIFLASLELIKLHVVFVEQFSNFGAIILRKEKK.

It belongs to the ScpA family. As to quaternary structure, component of a cohesin-like complex composed of ScpA, ScpB and the Smc homodimer, in which ScpA and ScpB bind to the head domain of Smc. The presence of the three proteins is required for the association of the complex with DNA.

The protein resides in the cytoplasm. In terms of biological role, participates in chromosomal partition during cell division. May act via the formation of a condensin-like complex containing Smc and ScpB that pull DNA away from mid-cell into both cell halves. In Streptococcus pyogenes serotype M18 (strain MGAS8232), this protein is Segregation and condensation protein A.